The following is a 274-amino-acid chain: 2,3,4,5-tetrahydropyridine-2,6-dicarboxylate N-succinyltransferase (274 aa).

2 residues coordinate substrate: R105 and D142.

This sequence belongs to the transferase hexapeptide repeat family. As to quaternary structure, homotrimer.

It localises to the cytoplasm. It catalyses the reaction (S)-2,3,4,5-tetrahydrodipicolinate + succinyl-CoA + H2O = (S)-2-succinylamino-6-oxoheptanedioate + CoA. It participates in amino-acid biosynthesis; L-lysine biosynthesis via DAP pathway; LL-2,6-diaminopimelate from (S)-tetrahydrodipicolinate (succinylase route): step 1/3. The polypeptide is 2,3,4,5-tetrahydropyridine-2,6-dicarboxylate N-succinyltransferase (Methylobacillus flagellatus (strain ATCC 51484 / DSM 6875 / VKM B-1610 / KT)).